The sequence spans 545 residues: Thermosome subunit alpha (545 aa).

Residues 522–545 (KKSTPPSGQGGQGQGMPGGGMPEY) form a disordered region. The segment covering 529 to 545 (GQGGQGQGMPGGGMPEY) has biased composition (gly residues).

Belongs to the TCP-1 chaperonin family. Forms a Heterooligomeric complex of two stacked eight-membered rings. The N-terminus is blocked.

Molecular chaperone; binds unfolded polypeptides in vitro, and has a weak ATPase activity. The polypeptide is Thermosome subunit alpha (thsA) (Thermoplasma acidophilum (strain ATCC 25905 / DSM 1728 / JCM 9062 / NBRC 15155 / AMRC-C165)).